A 489-amino-acid chain; its full sequence is Long chain base biosynthesis protein 2a (489 aa).

A helical transmembrane segment spans residues 2–22; sequence ITIPYLTAVSTYFSYGLLFAF. Lys-311 bears the N6-(pyridoxal phosphate)lysine mark.

Belongs to the class-II pyridoxal-phosphate-dependent aminotransferase family. As to quaternary structure, heterodimer with LCB1. Component of the serine palmitoyltransferase (SPT) complex, composed of LCB1 and LCB2 (LCB2a or LCB2b). It depends on pyridoxal 5'-phosphate as a cofactor. Ubiquitous. Detected in leaves, roots, stems, flowers and at a lower level in mature seeds.

It localises to the endoplasmic reticulum membrane. It carries out the reaction L-serine + hexadecanoyl-CoA + H(+) = 3-oxosphinganine + CO2 + CoA. It participates in lipid metabolism; sphingolipid metabolism. In terms of biological role, serine palmitoyltransferase (SPT). The heterodimer formed with LCB1 constitutes the catalytic core. Involved in the regulation of the programmed cell death (PCD) signaling pathway. Plays an important role during male gametogenesis and embryogenesis. The polypeptide is Long chain base biosynthesis protein 2a (LCB2a) (Arabidopsis thaliana (Mouse-ear cress)).